We begin with the raw amino-acid sequence, 475 residues long: Aspartyl/glutamyl-tRNA(Asn/Gln) amidotransferase subunit B (475 aa).

This sequence belongs to the GatB/GatE family. GatB subfamily. As to quaternary structure, heterotrimer of A, B and C subunits.

It catalyses the reaction L-glutamyl-tRNA(Gln) + L-glutamine + ATP + H2O = L-glutaminyl-tRNA(Gln) + L-glutamate + ADP + phosphate + H(+). The catalysed reaction is L-aspartyl-tRNA(Asn) + L-glutamine + ATP + H2O = L-asparaginyl-tRNA(Asn) + L-glutamate + ADP + phosphate + 2 H(+). In terms of biological role, allows the formation of correctly charged Asn-tRNA(Asn) or Gln-tRNA(Gln) through the transamidation of misacylated Asp-tRNA(Asn) or Glu-tRNA(Gln) in organisms which lack either or both of asparaginyl-tRNA or glutaminyl-tRNA synthetases. The reaction takes place in the presence of glutamine and ATP through an activated phospho-Asp-tRNA(Asn) or phospho-Glu-tRNA(Gln). The protein is Aspartyl/glutamyl-tRNA(Asn/Gln) amidotransferase subunit B of Lysinibacillus sphaericus (strain C3-41).